The primary structure comprises 458 residues: ATP synthase subunit beta (458 aa).

Residue 148-155 (GGAGVGKT) participates in ATP binding.

Belongs to the ATPase alpha/beta chains family. F-type ATPases have 2 components, CF(1) - the catalytic core - and CF(0) - the membrane proton channel. CF(1) has five subunits: alpha(3), beta(3), gamma(1), delta(1), epsilon(1). CF(0) has three main subunits: a(1), b(2) and c(9-12). The alpha and beta chains form an alternating ring which encloses part of the gamma chain. CF(1) is attached to CF(0) by a central stalk formed by the gamma and epsilon chains, while a peripheral stalk is formed by the delta and b chains.

It is found in the cell inner membrane. The catalysed reaction is ATP + H2O + 4 H(+)(in) = ADP + phosphate + 5 H(+)(out). In terms of biological role, produces ATP from ADP in the presence of a proton gradient across the membrane. The catalytic sites are hosted primarily by the beta subunits. In Nitrosococcus oceani (strain ATCC 19707 / BCRC 17464 / JCM 30415 / NCIMB 11848 / C-107), this protein is ATP synthase subunit beta.